The following is a 170-amino-acid chain: Adenine phosphoribosyltransferase (170 aa).

The protein belongs to the purine/pyrimidine phosphoribosyltransferase family. Homodimer.

It localises to the cytoplasm. The enzyme catalyses AMP + diphosphate = 5-phospho-alpha-D-ribose 1-diphosphate + adenine. The protein operates within purine metabolism; AMP biosynthesis via salvage pathway; AMP from adenine: step 1/1. Catalyzes a salvage reaction resulting in the formation of AMP, that is energically less costly than de novo synthesis. The protein is Adenine phosphoribosyltransferase of Streptococcus suis (strain 98HAH33).